Here is a 143-residue protein sequence, read N- to C-terminus: Peptide methionine sulfoxide reductase MsrB (143 aa).

Positions 5 to 127 constitute a MsrB domain; the sequence is KEKRLKELNR…NSAALKFIPK (123 aa). The active-site Nucleophile is C116.

This sequence belongs to the MsrB Met sulfoxide reductase family.

The catalysed reaction is L-methionyl-[protein] + [thioredoxin]-disulfide + H2O = L-methionyl-(R)-S-oxide-[protein] + [thioredoxin]-dithiol. In Bacillus pumilus (strain SAFR-032), this protein is Peptide methionine sulfoxide reductase MsrB.